Here is a 388-residue protein sequence, read N- to C-terminus: 4-hydroxy-3-methylbut-2-en-1-yl diphosphate synthase (flavodoxin) (388 aa).

Positions 281, 284, 316, and 323 each coordinate [4Fe-4S] cluster.

It belongs to the IspG family. [4Fe-4S] cluster is required as a cofactor.

The enzyme catalyses (2E)-4-hydroxy-3-methylbut-2-enyl diphosphate + oxidized [flavodoxin] + H2O + 2 H(+) = 2-C-methyl-D-erythritol 2,4-cyclic diphosphate + reduced [flavodoxin]. It participates in isoprenoid biosynthesis; isopentenyl diphosphate biosynthesis via DXP pathway; isopentenyl diphosphate from 1-deoxy-D-xylulose 5-phosphate: step 5/6. Functionally, converts 2C-methyl-D-erythritol 2,4-cyclodiphosphate (ME-2,4cPP) into 1-hydroxy-2-methyl-2-(E)-butenyl 4-diphosphate. In Arthrobacter sp. (strain FB24), this protein is 4-hydroxy-3-methylbut-2-en-1-yl diphosphate synthase (flavodoxin).